Consider the following 209-residue polypeptide: Yop proteins translocation protein K (209 aa).

Functionally, belongs to an operon involved in the translocation of Yop proteins across the bacterial membranes or in the specific control of this function. This chain is Yop proteins translocation protein K (yscK), found in Yersinia pseudotuberculosis serotype I (strain IP32953).